A 595-amino-acid polypeptide reads, in one-letter code: Thiol:disulfide interchange protein DsbD (595 aa).

The first 24 residues, 1-24 (MAQRFITLILLLCSVLLAPHSAQS), serve as a signal peptide directing secretion. Cysteine 134 and cysteine 140 are oxidised to a cystine. The interval 166–186 (NSSATVNPPATTQPEGDATPV) is disordered. Transmembrane regions (helical) follow at residues 197-217 (ALLI…YPLI), 233-253 (ILIL…LLGL), 270-290 (YVLI…FGLY), 311-331 (GGSL…CSPC), 332-352 (TTAP…MLAG), 353-373 (GGTL…VTLF), 384-404 (WMQY…VFLL), 411-431 (VWGL…AFVL), and 435-455 (AHAG…LIVA). Cysteine 209 and cysteine 331 are joined by a disulfide. The 141-residue stretch at 452–592 (LIVARPLQDW…FLQHLQNTPA (141 aa)) folds into the Thioredoxin domain. Cysteine 507 and cysteine 510 form a disulfide bridge.

Belongs to the thioredoxin family. DsbD subfamily.

It is found in the cell inner membrane. The catalysed reaction is [protein]-dithiol + NAD(+) = [protein]-disulfide + NADH + H(+). It catalyses the reaction [protein]-dithiol + NADP(+) = [protein]-disulfide + NADPH + H(+). Its function is as follows. Required to facilitate the formation of correct disulfide bonds in some periplasmic proteins and for the assembly of the periplasmic c-type cytochromes. Acts by transferring electrons from cytoplasmic thioredoxin to the periplasm. This transfer involves a cascade of disulfide bond formation and reduction steps. This chain is Thiol:disulfide interchange protein DsbD, found in Yersinia pestis bv. Antiqua (strain Nepal516).